The sequence spans 91 residues: DNA-binding protein HU (91 aa).

It belongs to the bacterial histone-like protein family. In terms of assembly, homodimer.

Its function is as follows. Histone-like DNA-binding protein which is capable of wrapping DNA to stabilize it, and thus to prevent its denaturation under extreme environmental conditions. The sequence is that of DNA-binding protein HU (hup) from Lactococcus lactis subsp. lactis (strain IL1403) (Streptococcus lactis).